The primary structure comprises 279 residues: 4-hydroxy-3-methylbut-2-enyl diphosphate reductase (279 aa).

A [4Fe-4S] cluster-binding site is contributed by C12. Residues H42 and H74 each coordinate (2E)-4-hydroxy-3-methylbut-2-enyl diphosphate. Dimethylallyl diphosphate contacts are provided by H42 and H74. Isopentenyl diphosphate is bound by residues H42 and H74. Residue C96 participates in [4Fe-4S] cluster binding. A (2E)-4-hydroxy-3-methylbut-2-enyl diphosphate-binding site is contributed by H124. H124 serves as a coordination point for dimethylallyl diphosphate. An isopentenyl diphosphate-binding site is contributed by H124. E126 acts as the Proton donor in catalysis. Position 162 (T162) interacts with (2E)-4-hydroxy-3-methylbut-2-enyl diphosphate. C190 contacts [4Fe-4S] cluster. 4 residues coordinate (2E)-4-hydroxy-3-methylbut-2-enyl diphosphate: S218, S219, N220, and S263. S218, S219, N220, and S263 together coordinate dimethylallyl diphosphate. Residues S218, S219, N220, and S263 each coordinate isopentenyl diphosphate.

This sequence belongs to the IspH family. [4Fe-4S] cluster serves as cofactor.

It carries out the reaction isopentenyl diphosphate + 2 oxidized [2Fe-2S]-[ferredoxin] + H2O = (2E)-4-hydroxy-3-methylbut-2-enyl diphosphate + 2 reduced [2Fe-2S]-[ferredoxin] + 2 H(+). The catalysed reaction is dimethylallyl diphosphate + 2 oxidized [2Fe-2S]-[ferredoxin] + H2O = (2E)-4-hydroxy-3-methylbut-2-enyl diphosphate + 2 reduced [2Fe-2S]-[ferredoxin] + 2 H(+). Its pathway is isoprenoid biosynthesis; dimethylallyl diphosphate biosynthesis; dimethylallyl diphosphate from (2E)-4-hydroxy-3-methylbutenyl diphosphate: step 1/1. It functions in the pathway isoprenoid biosynthesis; isopentenyl diphosphate biosynthesis via DXP pathway; isopentenyl diphosphate from 1-deoxy-D-xylulose 5-phosphate: step 6/6. Functionally, catalyzes the conversion of 1-hydroxy-2-methyl-2-(E)-butenyl 4-diphosphate (HMBPP) into a mixture of isopentenyl diphosphate (IPP) and dimethylallyl diphosphate (DMAPP). Acts in the terminal step of the DOXP/MEP pathway for isoprenoid precursor biosynthesis. The protein is 4-hydroxy-3-methylbut-2-enyl diphosphate reductase of Alkaliphilus oremlandii (strain OhILAs) (Clostridium oremlandii (strain OhILAs)).